The following is a 176-amino-acid chain: Transcription factor E (176 aa).

In terms of domain architecture, HTH TFE/IIEalpha-type spans 8-90 (NDPVIQKYLH…LWTFHYENIP (83 aa)).

This sequence belongs to the TFE family. In terms of assembly, monomer. Interaction with RNA polymerase subunits RpoF and RpoE is necessary for Tfe stimulatory transcription activity. Able to interact with Tbp and RNA polymerase in the absence of DNA promoter. Interacts both with the preinitiation and elongation complexes.

In terms of biological role, transcription factor that plays a role in the activation of archaeal genes transcribed by RNA polymerase. Facilitates transcription initiation by enhancing TATA-box recognition by TATA-box-binding protein (Tbp), and transcription factor B (Tfb) and RNA polymerase recruitment. Not absolutely required for transcription in vitro, but particularly important in cases where Tbp or Tfb function is not optimal. It dynamically alters the nucleic acid-binding properties of RNA polymerases by stabilizing the initiation complex and destabilizing elongation complexes. Seems to translocate with the RNA polymerase following initiation and acts by binding to the non template strand of the transcription bubble in elongation complexes. This is Transcription factor E from Haloquadratum walsbyi (strain DSM 16790 / HBSQ001).